The sequence spans 737 residues: Catalase-peroxidase (737 aa).

The N-terminal stretch at 1-23 (MLKKILPVLITLAIVHNTPTAWA) is a signal peptide. Positions 102-223 (WHGAGTYRIY…LAATQMGLIY (122 aa)) form a cross-link, tryptophyl-tyrosyl-methioninium (Trp-Tyr) (with M-249). His-103 serves as the catalytic Proton acceptor. Residues 223–249 (YVNPEGPNGKPDPVAAAKDIREAFARM) constitute a cross-link (tryptophyl-tyrosyl-methioninium (Tyr-Met) (with W-102)). His-264 provides a ligand contact to heme b.

The protein belongs to the peroxidase family. Peroxidase/catalase subfamily. Homodimer or homotetramer. Heme b serves as cofactor. In terms of processing, formation of the three residue Trp-Tyr-Met cross-link is important for the catalase, but not the peroxidase activity of the enzyme.

The catalysed reaction is H2O2 + AH2 = A + 2 H2O. The enzyme catalyses 2 H2O2 = O2 + 2 H2O. In terms of biological role, bifunctional enzyme with both catalase and broad-spectrum peroxidase activity. This chain is Catalase-peroxidase, found in Yersinia pseudotuberculosis serotype O:3 (strain YPIII).